Here is a 169-residue protein sequence, read N- to C-terminus: Putative prolyl-tRNA synthetase associated domain-containing protein 1 (169 aa).

This sequence belongs to the PRORSD1 family.

In Homo sapiens (Human), this protein is Putative prolyl-tRNA synthetase associated domain-containing protein 1 (PRORSD1P).